The sequence spans 491 residues: ATP-dependent protease ATPase subunit HslU (491 aa).

ATP is bound by residues Ile-34, 76–81 (GVGKTE), Asp-296, Glu-364, and Arg-436.

The protein belongs to the ClpX chaperone family. HslU subfamily. A double ring-shaped homohexamer of HslV is capped on each side by a ring-shaped HslU homohexamer. The assembly of the HslU/HslV complex is dependent on binding of ATP.

The protein resides in the cytoplasm. In terms of biological role, ATPase subunit of a proteasome-like degradation complex; this subunit has chaperone activity. The binding of ATP and its subsequent hydrolysis by HslU are essential for unfolding of protein substrates subsequently hydrolyzed by HslV. HslU recognizes the N-terminal part of its protein substrates and unfolds these before they are guided to HslV for hydrolysis. The polypeptide is ATP-dependent protease ATPase subunit HslU (Chlorobaculum tepidum (strain ATCC 49652 / DSM 12025 / NBRC 103806 / TLS) (Chlorobium tepidum)).